The primary structure comprises 438 residues: MAALVAAEAAESCSRNGPGRGRAPRGRLANQIPAEILNNPQLQAAIQVLPSNYNFEVPKTIWRIQQAQAKKVALQMPEGLLLFACTIVDILERFTEAEVMVMGDVTYGACCVDDFTARALGADFLVHYGHSCLVPMDTSAQDFRVLYVFVDIRIDTAHLLDSIRLTFPPASALALVSTIQFVSTLQAAAQELKAEYRVSVPQCKPLSPGEILGCTSPCLPKEVEAVVYLGDGRFHLESVMIANPNISAYRYDPYSKVLSREHYDHQRMQANRQEAIATARSAKSWGLILGTLGRQGSPKILEHLESRLQALGLPFVRLLLSEIFPSKLSLLPEVDVWVQVACPRLSIDWGTAFPKPLLTPYEAAVALRDISWQQPYPMDFYASSSLGPWTVNHGRDRLLQVPGRLALGKVQGGPARPSPAAACEACSCRDEEVSPIAL.

[4Fe-4S] cluster-binding residues include C110, C214, and C342. The residue at position 418 (S418) is a Phosphoserine.

The protein belongs to the DPH1/DPH2 family. DPH1 subfamily. As to quaternary structure, component of the 2-(3-amino-3-carboxypropyl)histidine synthase complex composed of DPH1, DPH2, DPH3 and a NADH-dependent reductase. Interacts with DPH2 and RBM8A. It depends on [4Fe-4S] cluster as a cofactor.

It localises to the nucleus. Its subcellular location is the cytoplasm. It catalyses the reaction L-histidyl-[translation elongation factor 2] + S-adenosyl-L-methionine = 2-[(3S)-amino-3-carboxypropyl]-L-histidyl-[translation elongation factor 2] + S-methyl-5'-thioadenosine + H(+). It participates in protein modification; peptidyl-diphthamide biosynthesis. Its function is as follows. Catalyzes the first step of diphthamide biosynthesis, a post-translational modification of histidine which occurs in elongation factor 2. DPH1 and DPH2 transfer a 3-amino-3-carboxypropyl (ACP) group from S-adenosyl-L-methionine (SAM) to a histidine residue, the reaction is assisted by a reduction system comprising DPH3 and a NADH-dependent reductase. This is 2-(3-amino-3-carboxypropyl)histidine synthase subunit 1 (DPH1) from Bos taurus (Bovine).